The sequence spans 423 residues: Phospholipase A1-IIalpha (423 aa).

Residues 194-217 (SAQEQVQGELKRLLELYKDEEISI) adopt a coiled-coil conformation. The active-site Acyl-ester intermediate is serine 223. Active-site charge relay system residues include serine 223, aspartate 290, and histidine 327. A disordered region spans residues 399–423 (HDDDVDADDNDDSSTSNQLQELNTD). The span at 401 to 410 (DDVDADDNDD) shows a compositional bias: acidic residues. Residues 411–423 (SSTSNQLQELNTD) show a composition bias toward polar residues.

It belongs to the AB hydrolase superfamily. Lipase family.

The protein localises to the cytoplasm. Its function is as follows. Acylhydrolase that catalyzes the hydrolysis of phospholipids at the sn-1 position. The chain is Phospholipase A1-IIalpha from Arabidopsis thaliana (Mouse-ear cress).